A 1269-amino-acid polypeptide reads, in one-letter code: DNA-directed RNA polymerase subunit beta (1269 aa).

This sequence belongs to the RNA polymerase beta chain family. In terms of assembly, the RNAP catalytic core consists of 2 alpha, 1 beta, 1 beta' and 1 omega subunit. When a sigma factor is associated with the core the holoenzyme is formed, which can initiate transcription.

It carries out the reaction RNA(n) + a ribonucleoside 5'-triphosphate = RNA(n+1) + diphosphate. Functionally, DNA-dependent RNA polymerase catalyzes the transcription of DNA into RNA using the four ribonucleoside triphosphates as substrates. The sequence is that of DNA-directed RNA polymerase subunit beta from Porphyromonas gingivalis (strain ATCC 33277 / DSM 20709 / CIP 103683 / JCM 12257 / NCTC 11834 / 2561).